The chain runs to 334 residues: Thioredoxin reductase aclT (334 aa).

Residues 16-19, 38-43, Ile93, Ala122, Asp294, and 302-303 contribute to the FAD site; these read GGPA, NASIDR, and TL.

This sequence belongs to the class-II pyridine nucleotide-disulfide oxidoreductase family. As to quaternary structure, homodimer. The cofactor is FAD.

It participates in mycotoxin biosynthesis. Functionally, thioredoxin reductase; part of the gene cluster that mediates the biosynthesis of aspirochlorine (or antibiotic A30641), an unusual halogenated spiro compound with distinctive antifungal properties due to selective inhibition of protein biosynthesis, and which is also active against bacteria, viruses, and murine tumor cells. The non-ribosomal peptide synthetase (NRPS) aclP is responsible the formation of the diketopiperazine (DKP) core from the condensation of 2 phenylalanine residues. One Phe residue is tailored into chlorotyrosine by hydroxylation and chlorination, whereas the second Phe undergoes an unprecedented C-C bond cleavage to be converted into glycine. After formation of the DKP, sulfur is incorporated into the DKP by conjugation with glutathione by aclG, followed by its stepwise degradation to the thiol by aclI, aclJ and aclK, and the dithiol oxidation by aclT. In addition, oxygenases (aclB, aclC, aclL and aclO) and O-methyltransferases (aclM and aclU) act as tailoring enzymes to produce the intermediate dechloroaspirochlorine. Ultimately, chlorination of dechloroaspirochlorine by the halogenase aclH is the last step in the aspirochlorine pathway. This Aspergillus oryzae (strain ATCC 42149 / RIB 40) (Yellow koji mold) protein is Thioredoxin reductase aclT.